The following is a 217-amino-acid chain: Very-long-chain (3R)-3-hydroxyacyl-CoA dehydratase PHS1 (217 aa).

Over 1–11 (MSKKLASPLSF) the chain is Cytoplasmic. The helical transmembrane segment at 12–29 (LPLYNLLSAVGWSYLLYL) threads the bilayer. The Lumenal portion of the chain corresponds to 30-47 (VISLYPKVGQPAFFYQTK). Residues 48-66 (NVATLVQCGAIIEIINSFL) traverse the membrane as a helical segment. Over 67–76 (GVVRSPLLTT) the chain is Cytoplasmic. Residues 77–94 (VAQVSSRLLVVLGIFQLL) form a helical membrane-spanning segment. Residues 95-99 (PNTSG) lie on the Lumenal side of the membrane. Residues 100 to 117 (VQSVVYISLLLAWSITEI) traverse the membrane as a helical segment. The Cytoplasmic segment spans residues 118-142 (VRYLYYFFMLVFKNGAPKILILLRY). Residues 143 to 160 (NLFWILYPTGVASELRII) traverse the membrane as a helical segment. Active-site residues include Tyr-149 and Glu-156. At 161-178 (YCALNAAESQYSLLYKRI) the chain is on the lumenal side. Residues 179-196 (LIAAMLAYIPGFPMLFLH) form a helical membrane-spanning segment. Over 197–217 (MVAQRKKVMKSLRSSFGKKLI) the chain is Cytoplasmic. The Endoplasmic reticulum retention signal motif lies at 214–217 (KKLI).

This sequence belongs to the very long-chain fatty acids dehydratase HACD family.

Its subcellular location is the endoplasmic reticulum membrane. The protein resides in the vacuole membrane. The enzyme catalyses a very-long-chain (3R)-3-hydroxyacyl-CoA = a very-long-chain (2E)-enoyl-CoA + H2O. It carries out the reaction (3R)-hydroxyeicosanoyl-CoA = (2E)-eicosenoyl-CoA + H2O. The catalysed reaction is (3R)-hydroxydocosanoyl-CoA = (2E)-docosenoyl-CoA + H2O. It catalyses the reaction (3R)-hydroxyoctadecanoyl-CoA = (2E)-octadecenoyl-CoA + H2O. The enzyme catalyses (3R)-hydroxytetracosanoyl-CoA = (2E)-tetracosenoyl-CoA + H2O. It carries out the reaction (3R)-hydroxyhexacosanoyl-CoA = (2E)-hexacosenoyl-CoA + H2O. The catalysed reaction is (3R)-hydroxyhexadecanoyl-CoA = (2E)-hexadecenoyl-CoA + H2O. The protein operates within lipid metabolism; fatty acid biosynthesis. In terms of biological role, catalyzes the third of the four reactions of the long-chain fatty acids elongation cycle. This endoplasmic reticulum-bound enzymatic process, allows the addition of two carbons to the chain of long- and very long-chain fatty acids/VLCFAs per cycle. This enzyme catalyzes the dehydration of the 3-hydroxyacyl-CoA intermediate into trans-2,3-enoyl-CoA, within each cycle of fatty acid elongation. Thereby, it participates in the production of VLCFAs of different chain lengths that are involved in multiple biological processes as precursors of membrane lipids and lipid mediators. This chain is Very-long-chain (3R)-3-hydroxyacyl-CoA dehydratase PHS1 (PHS1), found in Saccharomyces cerevisiae (strain ATCC 204508 / S288c) (Baker's yeast).